The primary structure comprises 439 residues: tRNA-2-methylthio-N(6)-dimethylallyladenosine synthase (439 aa).

The 118-residue stretch at 2-119 folds into the MTTase N-terminal domain; sequence KYIYIKTWGC…LPKMIDEVEK (118 aa). Cysteine 11, cysteine 48, cysteine 82, cysteine 156, cysteine 160, and cysteine 163 together coordinate [4Fe-4S] cluster. Residues 142-374 form the Radical SAM core domain; it reads KKKGYTADIS…QERINIQTML (233 aa). The region spanning 377 to 439 is the TRAM domain; it reads RKMFGSIQSV…HTHSLKGELF (63 aa).

This sequence belongs to the methylthiotransferase family. MiaB subfamily. In terms of assembly, monomer. Requires [4Fe-4S] cluster as cofactor.

The protein localises to the cytoplasm. It carries out the reaction N(6)-dimethylallyladenosine(37) in tRNA + (sulfur carrier)-SH + AH2 + 2 S-adenosyl-L-methionine = 2-methylsulfanyl-N(6)-dimethylallyladenosine(37) in tRNA + (sulfur carrier)-H + 5'-deoxyadenosine + L-methionine + A + S-adenosyl-L-homocysteine + 2 H(+). Catalyzes the methylthiolation of N6-(dimethylallyl)adenosine (i(6)A), leading to the formation of 2-methylthio-N6-(dimethylallyl)adenosine (ms(2)i(6)A) at position 37 in tRNAs that read codons beginning with uridine. This Buchnera aphidicola subsp. Acyrthosiphon pisum (strain APS) (Acyrthosiphon pisum symbiotic bacterium) protein is tRNA-2-methylthio-N(6)-dimethylallyladenosine synthase.